The sequence spans 405 residues: Phosphoglycerate kinase (405 aa).

Substrate contacts are provided by residues D24–N26, R40, H63–R66, R122, and R162. ATP contacts are provided by residues K212, E331, and G361–S364.

Belongs to the phosphoglycerate kinase family. As to quaternary structure, monomer.

The protein localises to the cytoplasm. It catalyses the reaction (2R)-3-phosphoglycerate + ATP = (2R)-3-phospho-glyceroyl phosphate + ADP. It functions in the pathway carbohydrate degradation; glycolysis; pyruvate from D-glyceraldehyde 3-phosphate: step 2/5. The chain is Phosphoglycerate kinase from Corynebacterium efficiens (strain DSM 44549 / YS-314 / AJ 12310 / JCM 11189 / NBRC 100395).